Here is a 72-residue protein sequence, read N- to C-terminus: Small ribosomal subunit protein bS18 (72 aa).

This sequence belongs to the bacterial ribosomal protein bS18 family. In terms of assembly, part of the 30S ribosomal subunit. Forms a tight heterodimer with protein bS6.

Its function is as follows. Binds as a heterodimer with protein bS6 to the central domain of the 16S rRNA, where it helps stabilize the platform of the 30S subunit. The sequence is that of Small ribosomal subunit protein bS18 from Francisella tularensis subsp. holarctica (strain FTNF002-00 / FTA).